A 413-amino-acid chain; its full sequence is Probable isoleucine--tRNA ligase, mitochondrial (413 aa).

The 'KMSKS' region signature appears at K298–S302. Residue K301 participates in ATP binding.

It belongs to the class-I aminoacyl-tRNA synthetase family.

The protein resides in the mitochondrion matrix. The enzyme catalyses tRNA(Ile) + L-isoleucine + ATP = L-isoleucyl-tRNA(Ile) + AMP + diphosphate. This chain is Probable isoleucine--tRNA ligase, mitochondrial, found in Ciona intestinalis (Transparent sea squirt).